The primary structure comprises 822 residues: DNA gyrase subunit A (822 aa).

The 466-residue stretch at 32 to 497 folds into the Topo IIA-type catalytic domain; sequence LPDVRDGLKP…QVLSLEDEDL (466 aa). Tyrosine 120 functions as the O-(5'-phospho-DNA)-tyrosine intermediate in the catalytic mechanism. The GyrA-box motif lies at 524-530; that stretch reads QKRGGRG.

Belongs to the type II topoisomerase GyrA/ParC subunit family. Heterotetramer, composed of two GyrA and two GyrB chains. In the heterotetramer, GyrA contains the active site tyrosine that forms a transient covalent intermediate with DNA, while GyrB binds cofactors and catalyzes ATP hydrolysis.

It is found in the cytoplasm. The enzyme catalyses ATP-dependent breakage, passage and rejoining of double-stranded DNA.. Its function is as follows. A type II topoisomerase that negatively supercoils closed circular double-stranded (ds) DNA in an ATP-dependent manner to modulate DNA topology and maintain chromosomes in an underwound state. Negative supercoiling favors strand separation, and DNA replication, transcription, recombination and repair, all of which involve strand separation. Also able to catalyze the interconversion of other topological isomers of dsDNA rings, including catenanes and knotted rings. Type II topoisomerases break and join 2 DNA strands simultaneously in an ATP-dependent manner. The polypeptide is DNA gyrase subunit A (Streptococcus pneumoniae (strain ATCC BAA-255 / R6)).